Here is a 679-residue protein sequence, read N- to C-terminus: Probable metal-nicotianamine transporter YSL18 (679 aa).

Positions 1 to 17 (MESVGDPRDGPSTERAF) are enriched in basic and acidic residues. A disordered region spans residues 1–21 (MESVGDPRDGPSTERAFEGQP). 14 helical membrane-spanning segments follow: residues 29-49 (VTLR…SVMM), 51-71 (LVFT…LGFF), 101-121 (CVVA…LLAM), 144-164 (FGRM…AIVP), 211-231 (LASL…NCGF), 255-275 (VGIG…GSII), 309-329 (VFCA…AISL), 379-399 (FAIS…PLMY), 407-427 (VAAA…GTGV), 441-461 (ILMF…SLVI), 497-517 (VIGT…FHHF), 547-567 (LPKY…AVCA), 593-613 (FLLV…VFLW), and 627-647 (VLAS…ALLA).

This sequence belongs to the YSL (TC 2.A.67.2) family.

It localises to the membrane. May be involved in the transport of nicotianamine-chelated metals. The polypeptide is Probable metal-nicotianamine transporter YSL18 (YSL18) (Oryza sativa subsp. japonica (Rice)).